The sequence spans 306 residues: MANITAALVKELREKTGAGMMDCKGALNETNGDLEAAVDWLRKKGLAKAAKKAGRVAAEGLVAVESAGRHAAVVEVNSETDFVARNDGFQAFAREAAKLALNTDGTLEGLQAATFPGSSETVQEKLSNLIATIGENMTLRRVAKLEVSKGVIASYVHGQINEGLGKIGVLVALESEGDVEFLSTLGRQIAMHVAATNPTALDASGVDQAVVERESNILREKNAGKPDHVMAKIVESGLKSYYKEVTLLEQPFVHDGSKTVSQILKEAAGKAGGEVAIKGFVRYALGEGIEKEEGPDFAAEVASMSR.

The involved in Mg(2+) ion dislocation from EF-Tu stretch occupies residues 80-83; sequence TDFV.

This sequence belongs to the EF-Ts family.

It is found in the cytoplasm. Its function is as follows. Associates with the EF-Tu.GDP complex and induces the exchange of GDP to GTP. It remains bound to the aminoacyl-tRNA.EF-Tu.GTP complex up to the GTP hydrolysis stage on the ribosome. The chain is Elongation factor Ts from Methylorubrum extorquens (strain CM4 / NCIMB 13688) (Methylobacterium extorquens).